A 255-amino-acid chain; its full sequence is Triosephosphate isomerase (255 aa).

9–11 (NWK) provides a ligand contact to substrate. His95 functions as the Electrophile in the catalytic mechanism. Residue Glu167 is the Proton acceptor of the active site. Residues Gly173, Ser212, and 233–234 (GG) contribute to the substrate site.

Belongs to the triosephosphate isomerase family. As to quaternary structure, homodimer.

It is found in the cytoplasm. The enzyme catalyses D-glyceraldehyde 3-phosphate = dihydroxyacetone phosphate. It participates in carbohydrate biosynthesis; gluconeogenesis. It functions in the pathway carbohydrate degradation; glycolysis; D-glyceraldehyde 3-phosphate from glycerone phosphate: step 1/1. Involved in the gluconeogenesis. Catalyzes stereospecifically the conversion of dihydroxyacetone phosphate (DHAP) to D-glyceraldehyde-3-phosphate (G3P). This chain is Triosephosphate isomerase, found in Photorhabdus laumondii subsp. laumondii (strain DSM 15139 / CIP 105565 / TT01) (Photorhabdus luminescens subsp. laumondii).